Here is a 421-residue protein sequence, read N- to C-terminus: ATP-dependent RNA helicase RhlB (421 aa).

Positions 9 to 37 (QKFSDFALHPQVVEALEKKGFYNCTPIQA) match the Q motif motif. Positions 40 to 219 (LPLTLAGRDV…FEQMNNAEYV (180 aa)) constitute a Helicase ATP-binding domain. 53-60 (AQTGTGKT) serves as a coordination point for ATP. Positions 165–168 (DEAD) match the DEAD box motif. The Helicase C-terminal domain maps to 245-390 (RLLQTLIEEE…VSKYNPEALM (146 aa)). Positions 396-421 (PLRLTRSRPGNGPRRAGAPRNRRRSG) are disordered. Over residues 402–414 (SRPGNGPRRAGAP) the composition is skewed to low complexity.

The protein belongs to the DEAD box helicase family. RhlB subfamily. As to quaternary structure, component of the RNA degradosome, which is a multiprotein complex involved in RNA processing and mRNA degradation.

Its subcellular location is the cytoplasm. It carries out the reaction ATP + H2O = ADP + phosphate + H(+). Functionally, DEAD-box RNA helicase involved in RNA degradation. Has RNA-dependent ATPase activity and unwinds double-stranded RNA. The polypeptide is ATP-dependent RNA helicase RhlB (Salmonella agona (strain SL483)).